The following is a 126-amino-acid chain: Large ribosomal subunit protein bL12 (126 aa).

Belongs to the bacterial ribosomal protein bL12 family. Homodimer. Part of the ribosomal stalk of the 50S ribosomal subunit. Forms a multimeric L10(L12)X complex, where L10 forms an elongated spine to which 2 to 4 L12 dimers bind in a sequential fashion. Binds GTP-bound translation factors.

Its function is as follows. Forms part of the ribosomal stalk which helps the ribosome interact with GTP-bound translation factors. Is thus essential for accurate translation. This Bifidobacterium longum subsp. infantis (strain ATCC 15697 / DSM 20088 / JCM 1222 / NCTC 11817 / S12) protein is Large ribosomal subunit protein bL12.